The sequence spans 251 residues: uncharacterized protein (251 aa).

Asparagine 149, asparagine 152, and asparagine 207 each carry an N-linked (GlcNAc...) asparagine; by host glycan. Residues 226 to 246 traverse the membrane as a helical segment; that stretch reads YLIFIIIIIIFIILILLWIKY.

It belongs to the glycosyltransferase 32 family.

The protein resides in the membrane. This is an uncharacterized protein from Acanthamoeba polyphaga (Amoeba).